A 20-amino-acid polypeptide reads, in one-letter code: Brevinin-1LT (20 aa).

C14 and C20 are oxidised to a cystine.

As to expression, expressed by the skin glands.

The protein localises to the secreted. Its function is as follows. Antimicrobial peptide. The chain is Brevinin-1LT from Rana latastei (Italian agile frog).